A 551-amino-acid chain; its full sequence is MIRIINGQTYFTSKYPNIIIPEKPIPHLILKHIRYKPDQVLLVDGLTFKEYSSHFVADTIEKVACGLNKLNIKKGDVLGVILPNLPEYVPIFHGTLLMGGITSLVNPDYTIEELSHTLATVSPRYLAVTLAVYEKIKNDLKRVFPSVEKVILVDIAGQTLKEIDQLTLSSDGIVMSFNQLTNNNGKDYPIVRIDLTKDTAIIPFSSGTTGLFKGVCLSHYNLVSNTYQTQTIETSTYKKNDSVIGVLPFFHSFGLMLHIMLMVKQGYRIVTLPKFEPVRFLELIKKYKVAMSFIVPPIAIMFAKSPIVDKFDLSSLRTLFCGAAPLGSEIEDLIKERFKGRLVIKQGYGATELSPCCFVTPNGLVKSGSSGTLLPNLLAKIISSETGENLGMGEKGEICIKGPNVMLGYYNNEKATNEVIDKDGFLKTGDIGYVDEDGYFFIIDRSKELIKCKGFQVPPAELEALLLSHPKVADACVVGLSKGDMGEVPRGFVVIKQNESLTEKELLDWAHPKIANYKHFRGGIFFIPAIPKSATGKLLRKNLKDFNNLKL.

ATP contacts are provided by S205, S206, G207, T208, T209, and K213. (E)-4-coumaroyl-AMP is bound at residue F253. K274 serves as a coordination point for CoA. The tract at residues 276–346 (EPVRFLELIK…RFKGRLVIKQ (71 aa)) is SBD1. Residues A323, Q346, G347, and T351 each contribute to the (E)-4-coumaroyl-AMP site. Positions 346, 347, 351, 430, and 445 each coordinate ATP. The tract at residues 347–409 (GYGATELSPC…IKGPNVMLGY (63 aa)) is SBD2. (E)-4-coumaroyl-AMP-binding residues include K447 and K451. Positions 453 and 454 each coordinate CoA. K537 is an ATP binding site.

It belongs to the ATP-dependent AMP-binding enzyme family. It depends on Mg(2+) as a cofactor.

It catalyses the reaction (E)-4-coumarate + ATP + CoA = (E)-4-coumaroyl-CoA + AMP + diphosphate. The catalysed reaction is (E)-4-coumarate + ATP + H(+) = (E)-4-coumaroyl-AMP + diphosphate. The enzyme catalyses (E)-4-coumaroyl-AMP + CoA = (E)-4-coumaroyl-CoA + AMP + H(+). Its pathway is phytoalexin biosynthesis; 3,4',5-trihydroxystilbene biosynthesis; 3,4',5-trihydroxystilbene from trans-4-coumarate: step 1/2. In terms of biological role, carboxylate--CoA ligase that may use 4-coumarate as substrate. Follows a two-step reaction mechanism, wherein the carboxylate substrate first undergoes adenylation by ATP, followed by a thioesterification in the presence of CoA to yield the final CoA thioester. The protein is Probable 4-coumarate--CoA ligase 3 (4cl3) of Dictyostelium discoideum (Social amoeba).